We begin with the raw amino-acid sequence, 541 residues long: Glucose-6-phosphate isomerase (541 aa).

Residue Glu-346 is the Proton donor of the active site. Residues His-377 and Lys-506 contribute to the active site.

It belongs to the GPI family.

It localises to the cytoplasm. The enzyme catalyses alpha-D-glucose 6-phosphate = beta-D-fructose 6-phosphate. The protein operates within carbohydrate biosynthesis; gluconeogenesis. Its pathway is carbohydrate degradation; glycolysis; D-glyceraldehyde 3-phosphate and glycerone phosphate from D-glucose: step 2/4. In terms of biological role, catalyzes the reversible isomerization of glucose-6-phosphate to fructose-6-phosphate. This is Glucose-6-phosphate isomerase from Rhizobium rhizogenes (strain K84 / ATCC BAA-868) (Agrobacterium radiobacter).